The sequence spans 155 residues: Interleukin-2 (155 aa).

The N-terminal stretch at 1–20 is a signal peptide; sequence MYKIQLLSCIALTLALVANG. O-linked (GalNAc...) threonine glycosylation occurs at Thr-23. The cysteines at positions 79 and 127 are disulfide-linked.

It belongs to the IL-2 family.

It localises to the secreted. Cytokine produced by activated CD4-positive helper T-cells and to a lesser extend activated CD8-positive T-cells and natural killer (NK) cells that plays pivotal roles in the immune response and tolerance. Binds to a receptor complex composed of either the high-affinity trimeric IL-2R (IL2RA/CD25, IL2RB/CD122 and IL2RG/CD132) or the low-affinity dimeric IL-2R (IL2RB and IL2RG). Interaction with the receptor leads to oligomerization and conformation changes in the IL-2R subunits resulting in downstream signaling starting with phosphorylation of JAK1 and JAK3. In turn, JAK1 and JAK3 phosphorylate the receptor to form a docking site leading to the phosphorylation of several substrates including STAT5. This process leads to activation of several pathways including STAT, phosphoinositide-3-kinase/PI3K and mitogen-activated protein kinase/MAPK pathways. Functions as a T-cell growth factor and can increase NK-cell cytolytic activity as well. Promotes strong proliferation of activated B-cells and subsequently immunoglobulin production. Plays a pivotal role in regulating the adaptive immune system by controlling the survival and proliferation of regulatory T-cells, which are required for the maintenance of immune tolerance. Moreover, participates in the differentiation and homeostasis of effector T-cell subsets, including Th1, Th2, Th17 as well as memory CD8-positive T-cells. This is Interleukin-2 (IL2) from Bubalus bubalis (Domestic water buffalo).